Consider the following 637-residue polypeptide: Sterol 3-beta-glucosyltransferase UGT80A2 (637 aa).

Disordered stretches follow at residues 1 to 29 (MPEISPAELAKVSSSSSSSSSSSSGRASV) and 66 to 112 (VAES…TERQ). Low complexity predominate over residues 13–24 (SSSSSSSSSSSS). Positions 67-79 (AESSGTGNKSFSR) are enriched in polar residues. Positions 103 to 112 (RLDKSKTERQ) are enriched in basic and acidic residues.

It belongs to the glycosyltransferase 28 family. In terms of tissue distribution, expressed in roots, cauline leaf epidermal cells, stomata, stamen, pollen and around the base of siliques.

It catalyses the reaction a sterol + UDP-alpha-D-glucose = a sterol 3-beta-D-glucoside + UDP + H(+). Its function is as follows. Involved in the biosynthesis of sterol glucosides. Catalyzes the synthesis of steryl glycosides (SGs) and acyl steryl glycosides (ASGs) which are the most abundant sterol derivatives in higher plants. Can act on several sterols like sitosterol, campesterol and stigmasterol. Both UGT80A2 and UGT80B1 are required for the normal production of SGs and ASGs in seeds. This is Sterol 3-beta-glucosyltransferase UGT80A2 (UGT80A2) from Arabidopsis thaliana (Mouse-ear cress).